The following is a 112-amino-acid chain: Ferredoxin-2 (112 aa).

2 4Fe-4S ferredoxin-type domains span residues 2 to 30 and 31 to 60; these read TYVVTDNCIACKYTDCVEVCPVDCFYEGE and NTLVIHPDECIDCGVCEPECPADAIRPDTE. [3Fe-4S] cluster is bound by residues Cys9 and Cys17. Residues Cys21, Cys40, Cys43, and Cys46 each contribute to the [4Fe-4S] cluster site. [3Fe-4S] cluster is bound at residue Cys50. Positions 85-103 are enriched in basic and acidic residues; it reads DPMPDHKKYDGETGKREKY. The segment at 85–112 is disordered; that stretch reads DPMPDHKKYDGETGKREKYFSPNPGTGD.

The cofactor is [4Fe-4S] cluster. [3Fe-4S] cluster is required as a cofactor.

In terms of biological role, ferredoxins are iron-sulfur proteins that transfer electrons in a wide variety of metabolic reactions. The chain is Ferredoxin-2 (fdxA) from Rhodobacter capsulatus (strain ATCC BAA-309 / NBRC 16581 / SB1003).